A 427-amino-acid polypeptide reads, in one-letter code: Gamma-glutamyl phosphate reductase (427 aa).

It belongs to the gamma-glutamyl phosphate reductase family.

The protein localises to the cytoplasm. The enzyme catalyses L-glutamate 5-semialdehyde + phosphate + NADP(+) = L-glutamyl 5-phosphate + NADPH + H(+). It functions in the pathway amino-acid biosynthesis; L-proline biosynthesis; L-glutamate 5-semialdehyde from L-glutamate: step 2/2. In terms of biological role, catalyzes the NADPH-dependent reduction of L-glutamate 5-phosphate into L-glutamate 5-semialdehyde and phosphate. The product spontaneously undergoes cyclization to form 1-pyrroline-5-carboxylate. This Anaeromyxobacter sp. (strain K) protein is Gamma-glutamyl phosphate reductase.